Here is a 339-residue protein sequence, read N- to C-terminus: 2-deoxy-scyllo-inosamine dehydrogenase (339 aa).

Residues Cys37, His59, Cys88, Cys91, Cys94, Cys102, and Glu143 each contribute to the Zn(2+) site.

Belongs to the zinc-containing alcohol dehydrogenase family. DOIA dehydrogenase subfamily. Requires Zn(2+) as cofactor.

The catalysed reaction is 2-deoxy-scyllo-inosamine + NADP(+) = 3-amino-2,3-dideoxy-scyllo-inosose + NADPH + H(+). It carries out the reaction 2-deoxy-scyllo-inosamine + NAD(+) = 3-amino-2,3-dideoxy-scyllo-inosose + NADH + H(+). The protein operates within metabolic intermediate biosynthesis; 2-deoxystreptamine biosynthesis; 2-deoxystreptamine from D-glucose 6-phosphate: step 3/4. It participates in antibiotic biosynthesis; tobramycin biosynthesis. Catalyzes the oxidation of 2-deoxy-scyllo-inosamine (DOIA) with NAD(+) or NADP(+), forming 3-amino-2,3-dideoxy-scyllo-inosose (amino-DOI). This Streptoalloteichus tenebrarius (strain ATCC 17920 / DSM 40477 / JCM 4838 / CBS 697.72 / NBRC 16177 / NCIMB 11028 / NRRL B-12390 / A12253. 1 / ISP 5477) (Streptomyces tenebrarius) protein is 2-deoxy-scyllo-inosamine dehydrogenase (tobE).